The following is a 39-amino-acid chain: B melanoma antigen 4 (39 aa).

Residues 1–17 form the signal peptide; it reads MAAGAVFLALSAQLLQA.

This sequence belongs to the BAGE family. In terms of tissue distribution, not expressed in normal tissues except in testis. Expressed in melanoma, bladder and lung carcinomas.

The protein resides in the secreted. Unknown. Candidate gene encoding tumor antigens. This is B melanoma antigen 4 (BAGE4) from Homo sapiens (Human).